Reading from the N-terminus, the 520-residue chain is GMP synthase [glutamine-hydrolyzing] (520 aa).

Residues 9–202 (SVLIIDFGSQ…VHNIAGITGD (194 aa)) enclose the Glutamine amidotransferase type-1 domain. C86 (nucleophile) is an active-site residue. Active-site residues include H176 and E178. The 193-residue stretch at 203–395 (WSMSAYRAKA…LGLPDSFIGR (193 aa)) folds into the GMPS ATP-PPase domain. 230–236 (SGGVDSS) contacts ATP.

In terms of assembly, homodimer.

The enzyme catalyses XMP + L-glutamine + ATP + H2O = GMP + L-glutamate + AMP + diphosphate + 2 H(+). Its pathway is purine metabolism; GMP biosynthesis; GMP from XMP (L-Gln route): step 1/1. In terms of biological role, catalyzes the synthesis of GMP from XMP. This chain is GMP synthase [glutamine-hydrolyzing], found in Allorhizobium ampelinum (strain ATCC BAA-846 / DSM 112012 / S4) (Agrobacterium vitis (strain S4)).